Here is a 276-residue protein sequence, read N- to C-terminus: Beta-lactamase OXA-1 (276 aa).

Residues 1 to 25 form the signal peptide; it reads MKNTIHINFAIFLIIANIIYSSASA. Serine 71 functions as the Acyl-ester intermediate in the catalytic mechanism. Residues serine 71, lysine 74, serine 118, threonine 216, and alanine 218 each coordinate a beta-lactam. The residue at position 74 (lysine 74) is an N6-carboxylysine.

It belongs to the class-D beta-lactamase family. In terms of assembly, monomer.

It is found in the periplasm. The enzyme catalyses a beta-lactam + H2O = a substituted beta-amino acid. Its activity is regulated as follows. Inhibited by penicillin sulfones. Only weakly inhibited by clavulanic acid and sulbactam. Functionally, class D beta-lactamase which confers resistance to the beta-lactam antibiotics, including amoxicillin and ticarcillin. Acts via hydrolysis of the beta-lactam ring. Has penicillin- and cephalosporin-hydrolyzing activities. The protein is Beta-lactamase OXA-1 of Escherichia coli.